The sequence spans 539 residues: GMP synthase [glutamine-hydrolyzing] (539 aa).

The 199-residue stretch at 4-202 (KILILDFGSQ…VLDIAGAKPD (199 aa)) folds into the Glutamine amidotransferase type-1 domain. Residue Cys81 is the Nucleophile of the active site. Catalysis depends on residues His176 and Glu178. Residues 203 to 395 (WIMRDHIEEA…LGLPAEMVYR (193 aa)) enclose the GMPS ATP-PPase domain. 230-236 (SGGVDSS) is an ATP binding site.

Homodimer.

It catalyses the reaction XMP + L-glutamine + ATP + H2O = GMP + L-glutamate + AMP + diphosphate + 2 H(+). It functions in the pathway purine metabolism; GMP biosynthesis; GMP from XMP (L-Gln route): step 1/1. Catalyzes the synthesis of GMP from XMP. In Burkholderia pseudomallei (strain 1106a), this protein is GMP synthase [glutamine-hydrolyzing].